A 291-amino-acid chain; its full sequence is MTATEELTFESTSRFAEVDVDGPLKLHYHEAGVGNDQTVVLLHGGGPGAASWTNFSRNIAVLARHFHVLAVDQPGYGHSDKRAEHGQFNRYAAMALKGLFDQLGLGRVPLVGNSLGGGTAVRFALDYPARAGRLVLMGPGGLSINLFAPDPTEGVKRLSKFSVAPTRENLEAFLRVMVYDKNLITPELVDQRFALASTPESLTATRAMGKSFAGADFEAGMMWREVYRLRQPVLLIWGREDRVNPLDGALVALKTIPRAQLHVFGQCGHWVQVEKFDEFNKLTIEFLGGGR.

Substrate contacts are provided by residues 45 to 46 (GG), Asn-54, Asn-113, Leu-115, and Arg-192. Catalysis depends on His-269, which acts as the Proton acceptor. Trp-270 is a binding site for substrate.

This sequence belongs to the AB hydrolase superfamily. HsaD family. Homodimer.

It catalyses the reaction (1E,2Z)-3-hydroxy-5,9,17-trioxo-4,5:9,10-disecoandrosta-1(10),2-dien-4-oate + H2O = 3-[(3aS,4S,7aS)-7a-methyl-1,5-dioxo-octahydro-1H-inden-4-yl]propanoate + (2Z,4Z)-2-hydroxyhexa-2,4-dienoate + H(+). It carries out the reaction 2,6-dioxo-6-phenylhexa-3-enoate + H2O = 2-oxopent-4-enoate + benzoate + H(+). It functions in the pathway lipid metabolism; steroid biosynthesis. In terms of biological role, catalyzes the hydrolysis of a carbon-carbon bond in 4,5: 9,10-diseco-3-hydroxy-5,9,17-trioxoandrosta-1(10),2-diene-4-oate (4,9-DSHA) to yield 9,17-dioxo-1,2,3,4,10,19-hexanorandrostan-5-oate (DOHNAA) and 2-hydroxy-hexa-2,4-dienoate (HHD). Is also able to catalyze the hydrolysis of 2-hydroxy-6-oxo-6-phenylhexa-2,4-dienoic acid (HOPDA) and the synthetic analog 8-(2-chlorophenyl)-2-hydroxy-5-methyl-6-oxoocta-2,4-dienoic acid (HOPODA). The sequence is that of 4,5:9,10-diseco-3-hydroxy-5,9,17-trioxoandrosta-1(10),2-diene-4-oate hydrolase (hsaD) from Mycobacterium tuberculosis (strain ATCC 25618 / H37Rv).